Consider the following 257-residue polypeptide: Thiazole synthase (257 aa).

The active-site Schiff-base intermediate with DXP is the K97. Residues G158, 184–185 (AG), and 206–207 (NT) contribute to the 1-deoxy-D-xylulose 5-phosphate site.

This sequence belongs to the ThiG family. Homotetramer. Forms heterodimers with either ThiH or ThiS.

It localises to the cytoplasm. The enzyme catalyses [ThiS sulfur-carrier protein]-C-terminal-Gly-aminoethanethioate + 2-iminoacetate + 1-deoxy-D-xylulose 5-phosphate = [ThiS sulfur-carrier protein]-C-terminal Gly-Gly + 2-[(2R,5Z)-2-carboxy-4-methylthiazol-5(2H)-ylidene]ethyl phosphate + 2 H2O + H(+). The protein operates within cofactor biosynthesis; thiamine diphosphate biosynthesis. Its function is as follows. Catalyzes the rearrangement of 1-deoxy-D-xylulose 5-phosphate (DXP) to produce the thiazole phosphate moiety of thiamine. Sulfur is provided by the thiocarboxylate moiety of the carrier protein ThiS. In vitro, sulfur can be provided by H(2)S. The chain is Thiazole synthase from Phocaeicola vulgatus (strain ATCC 8482 / DSM 1447 / JCM 5826 / CCUG 4940 / NBRC 14291 / NCTC 11154) (Bacteroides vulgatus).